The primary structure comprises 130 residues: Small ribosomal subunit protein uS11c (130 aa).

It belongs to the universal ribosomal protein uS11 family. As to quaternary structure, part of the 30S ribosomal subunit.

The protein localises to the plastid. Its subcellular location is the chloroplast. In Phaeodactylum tricornutum (strain CCAP 1055/1), this protein is Small ribosomal subunit protein uS11c.